We begin with the raw amino-acid sequence, 316 residues long: Acetaldehyde dehydrogenase (316 aa).

Residue 11–14 (SGNI) coordinates NAD(+). Cys131 serves as the catalytic Acyl-thioester intermediate. NAD(+)-binding positions include 162–170 (SAGPGTRAN) and Asn289.

Belongs to the acetaldehyde dehydrogenase family. As to quaternary structure, interacts with MhpE.

The catalysed reaction is acetaldehyde + NAD(+) + CoA = acetyl-CoA + NADH + H(+). It functions in the pathway aromatic compound metabolism; 3-phenylpropanoate degradation. Catalyzes the conversion of acetaldehyde to acetyl-CoA, using NAD(+) and coenzyme A. Is the final enzyme in the meta-cleavage pathway for the degradation of aromatic compounds. The chain is Acetaldehyde dehydrogenase from Escherichia coli O157:H7.